The sequence spans 760 residues: General transcription and DNA repair factor IIH helicase subunit XPD (760 aa).

One can recognise a Helicase ATP-binding domain in the interval 7-283 (GLLVYFPYDY…KETDEQRLRD (277 aa)). 42 to 49 (MPSGTGKT) lines the ATP pocket. 4 residues coordinate [4Fe-4S] cluster: C116, C134, C155, and C190. The DEAH box signature appears at 234 to 237 (DEAH). The tract at residues 438-637 (MDASLAIKPV…TQSRILKARL (200 aa)) is mediates interaction with MMS19. A Nuclear localization signal motif is present at residues 682–695 (KRFARADKRGKLPR).

The protein belongs to the helicase family. RAD3/XPD subfamily. In terms of assembly, component of the 7-subunit TFIIH core complex composed of XPB/ERCC3, XPD/ERCC2, GTF2H1, GTF2H2, GTF2H3, GTF2H4 and GTF2H5, which is active in NER. The core complex associates with the 3-subunit CDK-activating kinase (CAK) module composed of CCNH/cyclin H, CDK7 and MNAT1 to form the 10-subunit holoenzyme (holo-TFIIH) active in transcription. The interaction with GTF2H2 results in the stimulation of the 5'--&gt;3' helicase activity. Component of the MMXD complex, which includes CIAO1, ERCC2, CIAO2B, MMS19 and SLC25A5. Interacts with CIAO1 and CIAO2B; the interaction WITH CIAO2B is direct. Interacts with ATF7IP. Interacts directly with MMS19. Part of TBP-based Pol II pre-initiation complex (PIC), in which Pol II core assembles with general transcription factors and other specific initiation factors including GTF2E1, GTF2E2, GTF2F1, GTF2F2, TCEA1, ERCC2, ERCC3, GTF2H2, GTF2H3, GTF2H4, GTF2H5, GTF2A1, GTF2A2, GTF2B and TBP; this large multi-subunit PIC complex mediates DNA unwinding and targets Pol II core to the transcription start site where the first phosphodiester bond forms. Requires Mg(2+) as cofactor. [4Fe-4S] cluster serves as cofactor. ISGylated.

Its subcellular location is the nucleus. It localises to the cytoplasm. The protein resides in the cytoskeleton. The protein localises to the spindle. The enzyme catalyses Couples ATP hydrolysis with the unwinding of duplex DNA at the replication fork by translocating in the 5'-3' direction. This creates two antiparallel DNA single strands (ssDNA). The leading ssDNA polymer is the template for DNA polymerase III holoenzyme which synthesizes a continuous strand.. It carries out the reaction ATP + H2O = ADP + phosphate + H(+). Functionally, ATP-dependent 5'-3' DNA helicase. Component of the general transcription and DNA repair factor IIH (TFIIH) core complex which is involved in general and transcription-coupled nucleotide excision repair (NER) of damaged DNA. When complexed to CDK-activating kinase (CAK), involved in transcription by RNA polymerase II. In NER, TFIIH acts by opening DNA around the lesion to allow the excision of the damaged oligonucleotide and its replacement by a new DNA fragment. The ATP-dependent helicase activity of XPD/ERCC2 is required for DNA opening. In transcription, TFIIH has an essential role in transcription initiation. When the pre-initiation complex (PIC) has been established, TFIIH is required for promoter opening and promoter escape. Phosphorylation of the C-terminal tail (CTD) of the largest subunit of RNA polymerase II by the kinase module CAK controls the initiation of transcription. XPD/ERCC2 acts by forming a bridge between CAK and the core-TFIIH complex. Involved in the regulation of vitamin-D receptor activity. As part of the mitotic spindle-associated MMXD complex it plays a role in chromosome segregation. Might have a role in aging process and could play a causative role in the generation of skin cancers. The protein is General transcription and DNA repair factor IIH helicase subunit XPD of Cricetulus griseus (Chinese hamster).